We begin with the raw amino-acid sequence, 433 residues long: PHO85 cyclin-10 (433 aa).

Over residues 1–10 (MDMTKNHTTD) the composition is skewed to basic and acidic residues. Disordered regions lie at residues 1 to 20 (MDMTKNHTTDTEEFDDGDIR) and 51 to 81 (LTSEWDQSRSNTPGLAEGKTEKAQPCGTTDS). Over residues 51–63 (LTSEWDQSRSNTP) the composition is skewed to polar residues.

This sequence belongs to the cyclin family. PHO80 subfamily. As to quaternary structure, forms a cyclin-CDK complex with PHO85. Interacts with GSY2, independent of the presence of PHO85.

Its subcellular location is the cytoplasm. Cyclin partner of the cyclin-dependent kinase (CDK) PHO85. Together with cyclin PCL8, negatively controls glycogen accumulation under favorable growth conditions. The PCL10-PHO85 cyclin-CDK holoenzyme has glycogen synthase kinase activity and phosphorylates and negatively regulates glycogen synthase GSY2. Also has minor GLC8 kinase activity. The polypeptide is PHO85 cyclin-10 (PCL10) (Saccharomyces cerevisiae (strain ATCC 204508 / S288c) (Baker's yeast)).